The chain runs to 152 residues: Xanthine-guanine phosphoribosyltransferase (152 aa).

5-phospho-alpha-D-ribose 1-diphosphate-binding positions include R37 to G38, R69, and D88 to T96. R69 is a GMP binding site. Residue D89 participates in Mg(2+) binding. The guanine site is built by D92 and I135. D92 and I135 together coordinate xanthine. Residues D92–T96 and W134–I135 contribute to the GMP site.

The protein belongs to the purine/pyrimidine phosphoribosyltransferase family. XGPT subfamily. Homotetramer. It depends on Mg(2+) as a cofactor.

The protein localises to the cell inner membrane. It carries out the reaction GMP + diphosphate = guanine + 5-phospho-alpha-D-ribose 1-diphosphate. The catalysed reaction is XMP + diphosphate = xanthine + 5-phospho-alpha-D-ribose 1-diphosphate. The enzyme catalyses IMP + diphosphate = hypoxanthine + 5-phospho-alpha-D-ribose 1-diphosphate. It functions in the pathway purine metabolism; GMP biosynthesis via salvage pathway; GMP from guanine: step 1/1. It participates in purine metabolism; XMP biosynthesis via salvage pathway; XMP from xanthine: step 1/1. In terms of biological role, purine salvage pathway enzyme that catalyzes the transfer of the ribosyl-5-phosphate group from 5-phospho-alpha-D-ribose 1-diphosphate (PRPP) to the N9 position of the 6-oxopurines guanine and xanthine to form the corresponding ribonucleotides GMP (guanosine 5'-monophosphate) and XMP (xanthosine 5'-monophosphate), with the release of PPi. To a lesser extent, also acts on hypoxanthine. The chain is Xanthine-guanine phosphoribosyltransferase from Edwardsiella ictaluri (strain 93-146).